Reading from the N-terminus, the 1495-residue chain is Chromosome partition protein MukB (1495 aa).

Residue Gly-60–Ser-67 coordinates ATP. Coiled-coil stretches lie at residues Arg-322 to Asp-693, Glu-861 to Ser-1140, and Ile-1233 to Ile-1289. A flexible hinge region spans residues Pro-692 to Arg-809.

This sequence belongs to the SMC family. MukB subfamily. In terms of assembly, homodimerization via its hinge domain. Binds to DNA via its C-terminal region. Interacts, and probably forms a ternary complex, with MukE and MukF via its C-terminal region. The complex formation is stimulated by calcium or magnesium. Interacts with tubulin-related protein FtsZ.

The protein localises to the cytoplasm. It localises to the nucleoid. Functionally, plays a central role in chromosome condensation, segregation and cell cycle progression. Functions as a homodimer, which is essential for chromosome partition. Involved in negative DNA supercoiling in vivo, and by this means organize and compact chromosomes. May achieve or facilitate chromosome segregation by condensation DNA from both sides of a centrally located replisome during cell division. The sequence is that of Chromosome partition protein MukB from Pasteurella multocida (strain Pm70).